The following is a 153-amino-acid chain: Ribosomal RNA large subunit methyltransferase H (153 aa).

Residues leucine 70, glycine 102, and 121–126 each bind S-adenosyl-L-methionine; that span reads FSKMTF.

Belongs to the RNA methyltransferase RlmH family. As to quaternary structure, homodimer.

It localises to the cytoplasm. It carries out the reaction pseudouridine(1915) in 23S rRNA + S-adenosyl-L-methionine = N(3)-methylpseudouridine(1915) in 23S rRNA + S-adenosyl-L-homocysteine + H(+). Specifically methylates the pseudouridine at position 1915 (m3Psi1915) in 23S rRNA. This Desulfotalea psychrophila (strain LSv54 / DSM 12343) protein is Ribosomal RNA large subunit methyltransferase H.